We begin with the raw amino-acid sequence, 309 residues long: Small ribosomal subunit biogenesis GTPase RsgA (309 aa).

Residues 88–247 form the CP-type G domain; the sequence is KNLITRPPVA…IADTPGFNKP (160 aa). GTP is bound by residues 137–140 and 189–197; these read TKRD and GPSGVGKSS. Positions 272, 277, 279, and 285 each coordinate Zn(2+).

It belongs to the TRAFAC class YlqF/YawG GTPase family. RsgA subfamily. Monomer. Associates with 30S ribosomal subunit, binds 16S rRNA. It depends on Zn(2+) as a cofactor.

It is found in the cytoplasm. Functionally, one of several proteins that assist in the late maturation steps of the functional core of the 30S ribosomal subunit. Helps release RbfA from mature subunits. May play a role in the assembly of ribosomal proteins into the subunit. Circularly permuted GTPase that catalyzes slow GTP hydrolysis, GTPase activity is stimulated by the 30S ribosomal subunit. The chain is Small ribosomal subunit biogenesis GTPase RsgA from Prochlorococcus marinus (strain SARG / CCMP1375 / SS120).